A 103-amino-acid chain; its full sequence is Large ribosomal subunit protein bL21 (103 aa).

This sequence belongs to the bacterial ribosomal protein bL21 family. As to quaternary structure, part of the 50S ribosomal subunit. Contacts protein L20.

Functionally, this protein binds to 23S rRNA in the presence of protein L20. This is Large ribosomal subunit protein bL21 from Dechloromonas aromatica (strain RCB).